Here is a 191-residue protein sequence, read N- to C-terminus: Aminodeoxychorismate synthase component 2 (191 aa).

Residues 1 to 191 enclose the Glutamine amidotransferase type-1 domain; that stretch reads MLLLIDNYDS…HQLLDNFLNR (191 aa). Active-site residues include Cys-79, His-172, and Glu-174.

As to quaternary structure, monomer. Heterodimer consisting of two non-identical subunits: a glutamine amidotransferase subunit (PabA) and a aminodeoxychorismate synthase subunit (PabB).

It carries out the reaction chorismate + L-glutamine = 4-amino-4-deoxychorismate + L-glutamate. Its pathway is cofactor biosynthesis; tetrahydrofolate biosynthesis; 4-aminobenzoate from chorismate: step 1/2. Its function is as follows. Part of a heterodimeric complex that catalyzes the two-step biosynthesis of 4-amino-4-deoxychorismate (ADC), a precursor of p-aminobenzoate (PABA) and tetrahydrofolate. In the first step, a glutamine amidotransferase (PabA) generates ammonia as a substrate that, along with chorismate, is used in the second step, catalyzed by aminodeoxychorismate synthase (PabB) to produce ADC. PabA converts glutamine into glutamate only in the presence of stoichiometric amounts of PabB. In Serratia marcescens, this protein is Aminodeoxychorismate synthase component 2 (pabA).